Consider the following 2262-residue polypeptide: Klarsicht protein (2262 aa).

10 disordered regions span residues 1 to 140 (MEMQ…VGND), 345 to 410 (QQQQ…GEGN), 442 to 475 (AANG…LNEV), 514 to 561 (QSQS…PDIG), 800 to 832 (ATSS…DKEN), 859 to 898 (SNYD…QLQM), 1000 to 1031 (HLPP…VSPV), 1115 to 1157 (PSCK…SEGF), 1246 to 1316 (SGLA…ELGG), and 1533 to 1670 (VRRK…QQSR). The interval 1 to 1774 (MEMQQENETG…KPTPELLDTE (1774 aa)) is required for apical microtubules localization. Over 1–2215 (MEMQQENETG…KRGWAWRIAR (2215 aa)) the chain is Cytoplasmic. The span at 58 to 67 (KIEHTTKPLK) shows a compositional bias: basic and acidic residues. Polar residues predominate over residues 131–140 (NYGTNSVGND). Positions 345–402 (QQQQLSSQQPASLTSNCSSESTSESATKSSSLSSGFASDPVTTPIGTAAAAPPSSSTH) are enriched in low complexity. Positions 446–475 (LDDDEDEEEDTEDDSFGYEGEATEDDLNEV) are enriched in acidic residues. Low complexity predominate over residues 514 to 525 (QSQSRSQQVPSQ). Residues 546–560 (EADEELEEEDEDPDI) are compositionally biased toward acidic residues. Composition is skewed to low complexity over residues 809–818 (STAVSSTTAT) and 859–881 (SNYD…SNSN). Residues 882–894 (GRLTETSATSRVT) show a composition bias toward polar residues. Over residues 1006–1018 (PAKSAKSTKSQAS) the composition is skewed to low complexity. Residues 1019–1028 (NATVSGSTLV) are compositionally biased toward polar residues. The segment covering 1246-1259 (SGLASHSISESALD) has biased composition (polar residues). The span at 1267-1280 (PRAASSSGTGSNAA) shows a compositional bias: low complexity. A compositionally biased stretch (basic residues) spans 1288 to 1299 (SLRRRKARKKRI). The segment covering 1550–1559 (QSDQQQQQLQ) has biased composition (low complexity). Over residues 1560 to 1583 (VTPSLSASATALMTTPKNQSTSHQ) the composition is skewed to polar residues. Basic and acidic residues-rich tracts occupy residues 1586 to 1596 (HRAESVGRKLD) and 1610 to 1640 (RTSE…EKCI). Positions 1809–1842 (LTKQERRLQSALEEQEQQQESEQLKQQKLVEEEK) form a coiled coil. The tract at residues 2092 to 2205 (HQQKQQIQQN…GEGADPAQTS (114 aa)) is disordered. Residues 2093–2105 (QQKQQIQQNQTQQ) show a composition bias toward low complexity. A compositionally biased stretch (basic residues) spans 2130–2142 (RRGKGARKARQAK). Positions 2207-2262 (RGWAWRIARAAVPMQVALFTIFCAACLMQPNCCDNLNNLSMSFTPQLRYIRGPPPI) constitute a KASH domain. A helical; Anchor for type IV membrane protein membrane pass occupies residues 2216–2236 (AAVPMQVALFTIFCAACLMQP). Over 2237–2262 (NCCDNLNNLSMSFTPQLRYIRGPPPI) the chain is Perinuclear space.

Belongs to the nesprin family. As to quaternary structure, core component of LINC complexes which are composed of inner nuclear membrane SUN domain-containing proteins coupled to outer nuclear membrane KASH domain-containing nesprins. Interacts with kud. Interacts with Msp300; this interaction allows the anchoring of Msp300 nuclear ring structure to the nuclear envelope. As to expression, expressed ubiquitously in the eye disk, but at much higher levels posterior to the morphogenetic furrow. Expressed in R-cells and also in non-neural cone cells.

It localises to the cytoplasm. It is found in the cytoskeleton. The protein localises to the microtubule organizing center. The protein resides in the perinuclear region. Its subcellular location is the nucleus membrane. It localises to the nucleus envelope. Component of the LINC (LInker of Nucleoskeleton and Cytoskeleton) complex involved in the connection between the nuclear lamina and the cytoskeleton. Plays a role in the nuclear positioning and links the nucleus to the microtubule organizing center (MTOC). Collaborates with Klar to promote even spacing of the myonuclei at the periphery of striated muscle fibers by mediating a tight association between a nuclear ring structure of Msp300 and the plus ends of a unique astral microtubule (MT) network. This Drosophila melanogaster (Fruit fly) protein is Klarsicht protein.